We begin with the raw amino-acid sequence, 351 residues long: Beta-hexosaminidase (351 aa).

Substrate-binding positions include D62, R70, R133, and 163 to 164 (KH). Residue H176 is the Proton donor/acceptor of the active site. The active-site Nucleophile is D248.

The protein belongs to the glycosyl hydrolase 3 family. NagZ subfamily. In terms of assembly, monomer.

The protein resides in the cytoplasm. It carries out the reaction Hydrolysis of terminal non-reducing N-acetyl-D-hexosamine residues in N-acetyl-beta-D-hexosaminides.. The protein operates within cell wall biogenesis; peptidoglycan recycling. Plays a role in peptidoglycan recycling by cleaving the terminal beta-1,4-linked N-acetylglucosamine (GlcNAc) from peptide-linked peptidoglycan fragments, giving rise to free GlcNAc, anhydro-N-acetylmuramic acid and anhydro-N-acetylmuramic acid-linked peptides. This chain is Beta-hexosaminidase, found in Haemophilus influenzae (strain ATCC 51907 / DSM 11121 / KW20 / Rd).